We begin with the raw amino-acid sequence, 126 residues long: 13 kDa ribonucleoprotein-associated protein (126 aa).

The protein belongs to the eukaryotic ribosomal protein eL8 family. As to quaternary structure, component of the U3 snoRNP particle. Binds to the C'/D and B/C motifs in U3 snoRNA. Component of the 25S U4/U6.U5 tri-snRNP particle, a subcomplex of the spliceosome. Binds to the 5' stem-loop of U4 snRNA.

It localises to the nucleus. The protein resides in the nucleolus. Functionally, common component of the spliceosome and rRNA processing machinery. In association with the spliceosomal U4/U6.U5 tri-snRNP particle, required for splicing of pre-mRNA. In association with box C/D snoRNPs, required for processing of pre-ribosomal RNA (rRNA) and site-specific 2'-O-methylation of substrate RNAs. Essential for the accumulation and stability of U4 snRNA, U6 snRNA, and box C/D snoRNAs. The protein is 13 kDa ribonucleoprotein-associated protein (SNU13) of Candida albicans (strain SC5314 / ATCC MYA-2876) (Yeast).